The following is a 154-amino-acid chain: Pro-corazonin (154 aa).

Positions 1 to 19 are cleaved as a signal peptide; the sequence is MLRLLLLPLFLFTLSMCMG. A Pyrrolidone carboxylic acid modification is found at Q20. N30 bears the Asparagine amide mark. The propeptide occupies 70 to 154; that stretch reads LERCLSQLQR…SAEPNVFGKH (85 aa).

It belongs to the corazonin family. Expression is restricted to 24 neurons in the larval CNS (8 in the brain and 16 in the ventral nerve cord) and 12-16 neurons in the pars lateralis of the adult brain.

It localises to the secreted. In terms of biological role, cardioactive peptide. Corazonin is probably involved in the physiological regulation of the heart beat. Clock (Clk) and cycle (cyc) proteins negatively regulate Crz transcription in a cell-specific manner. The protein is Pro-corazonin (Crz) of Drosophila simulans (Fruit fly).